The following is a 183-amino-acid chain: Ribosome-recycling factor (183 aa).

It belongs to the RRF family.

It localises to the cytoplasm. Functionally, responsible for the release of ribosomes from messenger RNA at the termination of protein biosynthesis. May increase the efficiency of translation by recycling ribosomes from one round of translation to another. This chain is Ribosome-recycling factor, found in Deinococcus deserti (strain DSM 17065 / CIP 109153 / LMG 22923 / VCD115).